A 396-amino-acid chain; its full sequence is Tryptophan synthase beta chain (396 aa).

N6-(pyridoxal phosphate)lysine is present on K86.

Belongs to the TrpB family. In terms of assembly, tetramer of two alpha and two beta chains. Pyridoxal 5'-phosphate is required as a cofactor.

The enzyme catalyses (1S,2R)-1-C-(indol-3-yl)glycerol 3-phosphate + L-serine = D-glyceraldehyde 3-phosphate + L-tryptophan + H2O. It participates in amino-acid biosynthesis; L-tryptophan biosynthesis; L-tryptophan from chorismate: step 5/5. Functionally, the beta subunit is responsible for the synthesis of L-tryptophan from indole and L-serine. The chain is Tryptophan synthase beta chain from Aliivibrio fischeri (strain MJ11) (Vibrio fischeri).